A 466-amino-acid chain; its full sequence is uncharacterized protein (466 aa).

The 196-residue stretch at asparagine 4–leucine 199 folds into the C2 NT-type domain. Disordered stretches follow at residues alanine 262–isoleucine 298, leucine 374–methionine 393, and glutamate 400–arginine 452. The span at threonine 266–isoleucine 298 shows a compositional bias: polar residues. Phosphoserine is present on residues serine 433 and serine 439.

It to S.pombe SpCC1494.08c.

This is an uncharacterized protein from Saccharomyces cerevisiae (strain ATCC 204508 / S288c) (Baker's yeast).